We begin with the raw amino-acid sequence, 201 residues long: UPF0323 lipoprotein Cj0371 (201 aa).

A signal peptide spans 1–26 (MKKIKKIIQIGMIGGLAAVAGGALAG). Cysteine 27 carries the N-palmitoyl cysteine lipid modification. Cysteine 27 carries the S-diacylglycerol cysteine lipid modification. A disordered region spans residues 169-201 (NKAGTTSSASSAKKSGFFGGGSKATSSSSSFGS). Composition is skewed to low complexity over residues 170–184 (KAGTTSSASSAKKSG) and 191–201 (KATSSSSSFGS).

The protein belongs to the UPF0323 family.

Its subcellular location is the cell membrane. This chain is UPF0323 lipoprotein Cj0371, found in Campylobacter jejuni subsp. jejuni serotype O:2 (strain ATCC 700819 / NCTC 11168).